The sequence spans 637 residues: MASFSFFGTIPSSPTKASVFSLPVSVTTLPSFPRRRATRVSVSANSKKDQDRTASRRENPSTFSSKYAPNVPRSGADILVEALERQGVDVVFAYPGGASMEIHQALTRSNTIRNVLPRHEQGGIFAAEGYARSSGKPGICIATSGPGAMNLVSGLADALFDSVPLIAITGQVPRRMIGTMAFQETPVVEVTRTITKHNYLVMEVDDIPRIVREAFFLATSVRPGPVLIDVPKDVQQQFAIPNWEQPMRLPLYMSTMPKPPKVSHLEQILRLVSESKRPVLYVGGGCLNSSEELRRFVELTGIPVASTFMGLGSYPCDDEEFSLQMLGMHGTVYANYAVEYSDLLLAFGVRFDDRVTGKLEAFASRAKIVHIDIDSTEIGKNKTPHVSVCCDVQLALQGMNEVLENRRDVLDFGEWRCELNEQRLKFPLRYKTFGEEIPPQYAIQLLDELTDGKAIITTGVGQHQMWAAQFYRFKKPRQWLSSGGLGAMGFGLPAAMGAAIANPGAVVVDIDGDGSFIMNIQELATIRVENLPVKVLLINNQHLGMVLQWEDHFYAANRADSFLGDPANPEAVFPDMLLFAASCGIPAARVTRREDLREAIQTMLDTPGPFLLDVVCPHQDHVLPLIPSGGTFKDIIV.

The transit peptide at 1 to 73 directs the protein to the chloroplast; the sequence is MASFSFFGTI…SSKYAPNVPR (73 aa). Positions 35 to 69 are disordered; the sequence is RRATRVSVSANSKKDQDRTASRRENPSTFSSKYAP. Basic and acidic residues predominate over residues 46–59; that stretch reads SKKDQDRTASRREN. Glutamate 120 provides a ligand contact to thiamine diphosphate. Residues arginine 222, 329–350, and 372–391 contribute to the FAD site; these read HGTVYANYAVEYSDLLLAFGVR and DIDSTEIGKNKTPHVSVCCD. Positions 462 to 542 are thiamine pyrophosphate binding; that stretch reads QHQMWAAQFY…VKVLLINNQH (81 aa). The Mg(2+) site is built by aspartate 513 and asparagine 540.

This sequence belongs to the TPP enzyme family. The cofactor is Mg(2+). Requires thiamine diphosphate as cofactor.

The protein localises to the plastid. It is found in the chloroplast. The enzyme catalyses 2 pyruvate + H(+) = (2S)-2-acetolactate + CO2. The protein operates within amino-acid biosynthesis; L-isoleucine biosynthesis; L-isoleucine from 2-oxobutanoate: step 1/4. Its pathway is amino-acid biosynthesis; L-valine biosynthesis; L-valine from pyruvate: step 1/4. This Brassica napus (Rape) protein is Acetolactate synthase 2, chloroplastic.